Here is a 457-residue protein sequence, read N- to C-terminus: Glutamate--tRNA ligase 2 (457 aa).

Positions 9-19 (PSPTGYIHIGN) match the 'HIGH' region motif. The 'KMSKS' region motif lies at 250 to 254 (GLSKR). ATP is bound at residue lysine 253.

It belongs to the class-I aminoacyl-tRNA synthetase family. Glutamate--tRNA ligase type 1 subfamily. Monomer.

The protein resides in the cytoplasm. The enzyme catalyses tRNA(Glu) + L-glutamate + ATP = L-glutamyl-tRNA(Glu) + AMP + diphosphate. In terms of biological role, catalyzes the attachment of glutamate to tRNA(Glu) in a two-step reaction: glutamate is first activated by ATP to form Glu-AMP and then transferred to the acceptor end of tRNA(Glu). This chain is Glutamate--tRNA ligase 2, found in Brucella melitensis biotype 1 (strain ATCC 23456 / CCUG 17765 / NCTC 10094 / 16M).